Consider the following 196-residue polypeptide: Proteasome subunit beta 1 (196 aa).

Positions Met1–Gly6 are cleaved as a propeptide — removed in mature form; by autocatalysis. The active-site Nucleophile is the Thr7.

Belongs to the peptidase T1B family. As to quaternary structure, the 20S proteasome core is composed of 14 alpha and 14 beta subunits that assemble into four stacked heptameric rings, resulting in a barrel-shaped structure. The two inner rings, each composed of seven catalytic beta subunits, are sandwiched by two outer rings, each composed of seven alpha subunits. The catalytic chamber with the active sites is on the inside of the barrel. Has a gated structure, the ends of the cylinder being occluded by the N-termini of the alpha-subunits. Is capped at one or both ends by the proteasome regulatory ATPase, PAN.

The protein resides in the cytoplasm. It catalyses the reaction Cleavage of peptide bonds with very broad specificity.. With respect to regulation, the formation of the proteasomal ATPase PAN-20S proteasome complex, via the docking of the C-termini of PAN into the intersubunit pockets in the alpha-rings, triggers opening of the gate for substrate entry. Interconversion between the open-gate and close-gate conformations leads to a dynamic regulation of the 20S proteasome proteolysis activity. In terms of biological role, component of the proteasome core, a large protease complex with broad specificity involved in protein degradation. In Pyrococcus furiosus (strain ATCC 43587 / DSM 3638 / JCM 8422 / Vc1), this protein is Proteasome subunit beta 1.